The chain runs to 184 residues: Threonylcarbamoyl-AMP synthase (184 aa).

Residues 1–184 form the YrdC-like domain; the sequence is MNNLENIVEQ…IFTQHIFRQG (184 aa).

This sequence belongs to the SUA5 family. TsaC subfamily.

It localises to the cytoplasm. The enzyme catalyses L-threonine + hydrogencarbonate + ATP = L-threonylcarbamoyladenylate + diphosphate + H2O. Required for the formation of a threonylcarbamoyl group on adenosine at position 37 (t(6)A37) in tRNAs that read codons beginning with adenine. Catalyzes the conversion of L-threonine, HCO(3)(-)/CO(2) and ATP to give threonylcarbamoyl-AMP (TC-AMP) as the acyladenylate intermediate, with the release of diphosphate. This is Threonylcarbamoyl-AMP synthase from Actinobacillus pleuropneumoniae serotype 5b (strain L20).